Consider the following 146-residue polypeptide: 3-dehydroquinate dehydratase (146 aa).

Tyr24 serves as the catalytic Proton acceptor. 3 residues coordinate substrate: Asn73, His79, and Asp86. His99 (proton donor) is an active-site residue. Residues 100-101 and Arg110 contribute to the substrate site; that span reads LS.

This sequence belongs to the type-II 3-dehydroquinase family. As to quaternary structure, homododecamer.

It catalyses the reaction 3-dehydroquinate = 3-dehydroshikimate + H2O. It participates in metabolic intermediate biosynthesis; chorismate biosynthesis; chorismate from D-erythrose 4-phosphate and phosphoenolpyruvate: step 3/7. In terms of biological role, catalyzes a trans-dehydration via an enolate intermediate. The protein is 3-dehydroquinate dehydratase of Shewanella baltica (strain OS185).